We begin with the raw amino-acid sequence, 296 residues long: Large ribosomal subunit protein uL15m (296 aa).

Residues 1-21 (MAGPLQGGGARALDLLRGLPR) constitute a mitochondrion transit peptide. The interval 22–66 (VSLANLKPNPGSKKPERRPRGRRRGRKCGRGHKGERQRGTRPRLG) is disordered. Residues 36–52 (PERRPRGRRRGRKCGRG) show a composition bias toward basic residues.

This sequence belongs to the universal ribosomal protein uL15 family. Component of the mitochondrial large ribosomal subunit (mt-LSU). Mature mammalian 55S mitochondrial ribosomes consist of a small (28S) and a large (39S) subunit. The 28S small subunit contains a 12S ribosomal RNA (12S mt-rRNA) and 30 different proteins. The 39S large subunit contains a 16S rRNA (16S mt-rRNA), a copy of mitochondrial valine transfer RNA (mt-tRNA(Val)), which plays an integral structural role, and 52 different proteins.

It is found in the mitochondrion. The sequence is that of Large ribosomal subunit protein uL15m (MRPL15) from Homo sapiens (Human).